A 134-amino-acid polypeptide reads, in one-letter code: C-C motif chemokine 21 (134 aa).

The first 23 residues, 1-23 (MAQSLALSLLILVLAFGIPRTQG), serve as a signal peptide directing secretion. 3 disulfide bridges follow: Cys31–Cys57, Cys32–Cys75, and Cys103–Cys122. Residues 88–134 (QHLDKTPSPQKPAQGCRKDRGASKTGKKGKGSKGCKRTERSQTPKGP) are disordered. Positions 98–134 (KPAQGCRKDRGASKTGKKGKGSKGCKRTERSQTPKGP) are C-terminal basic extension. Positions 112-122 (TGKKGKGSKGC) are enriched in basic residues. Over residues 123 to 134 (KRTERSQTPKGP) the composition is skewed to basic and acidic residues.

It belongs to the intercrine beta (chemokine CC) family. In terms of assembly, monomer. Binds to CCR7. Interacts with PDPN; relocalizes PDPN to the basolateral membrane. Interacts with TNFAIP6 (via Link domain). Interacts with GPR174. Highly expressed in high endothelial venules of lymph nodes, spleen and appendix. Intermediate levels found in small intestine, thyroid gland and trachea. Low level expression in thymus, bone marrow, liver, and pancreas. Also found in tonsil, fetal heart and fetal spleen.

It is found in the secreted. Its function is as follows. Inhibits hemopoiesis and stimulates chemotaxis. Chemotactic in vitro for thymocytes and activated T-cells, but not for B-cells, macrophages, or neutrophils. Shows preferential activity towards naive T-cells. May play a role in mediating homing of lymphocytes to secondary lymphoid organs. Binds to atypical chemokine receptor ACKR4 and mediates the recruitment of beta-arrestin (ARRB1/2) to ACKR4. This chain is C-C motif chemokine 21 (CCL21), found in Homo sapiens (Human).